Reading from the N-terminus, the 200-residue chain is Phospholipase A2 inhibitor LNF1 (200 aa).

The N-terminal stretch at 1 to 19 (MKYLHTICLLFIFVARGNS) is a signal peptide. 8 disulfide bridges follow: C22-C46, C25-C32, C39-C67, C73-C94, C95-C100, C118-C143, C136-C165, and C169-C191. The N-linked (GlcNAc...) asparagine glycan is linked to N176.

The protein belongs to the CNF-like-inhibitor family. As to quaternary structure, occurs as a mixture of oligomers. Tetrameric arrangement appears to be the predominant quaternary structure. Expressed by the liver.

The protein localises to the secreted. In terms of biological role, inhibits the enzymatic activity of phospholipase A2 (PA2). The chain is Phospholipase A2 inhibitor LNF1 from Lachesis muta muta (Bushmaster).